Reading from the N-terminus, the 61-residue chain is Small ribosomal subunit protein uS14B (61 aa).

The Zn(2+) site is built by cysteine 24, cysteine 27, cysteine 40, and cysteine 43.

The protein belongs to the universal ribosomal protein uS14 family. Zinc-binding uS14 subfamily. As to quaternary structure, part of the 30S ribosomal subunit. Contacts proteins S3 and S10. Zn(2+) is required as a cofactor.

In terms of biological role, binds 16S rRNA, required for the assembly of 30S particles and may also be responsible for determining the conformation of the 16S rRNA at the A site. This chain is Small ribosomal subunit protein uS14B, found in Bacillus velezensis (strain DSM 23117 / BGSC 10A6 / LMG 26770 / FZB42) (Bacillus amyloliquefaciens subsp. plantarum).